A 171-amino-acid polypeptide reads, in one-letter code: Adenine phosphoribosyltransferase (171 aa).

Belongs to the purine/pyrimidine phosphoribosyltransferase family. Homodimer.

It localises to the cytoplasm. The catalysed reaction is AMP + diphosphate = 5-phospho-alpha-D-ribose 1-diphosphate + adenine. The protein operates within purine metabolism; AMP biosynthesis via salvage pathway; AMP from adenine: step 1/1. Catalyzes a salvage reaction resulting in the formation of AMP, that is energically less costly than de novo synthesis. The polypeptide is Adenine phosphoribosyltransferase (Trichlorobacter lovleyi (strain ATCC BAA-1151 / DSM 17278 / SZ) (Geobacter lovleyi)).